Reading from the N-terminus, the 480-residue chain is Glycogen synthase (480 aa).

Lysine 15 provides a ligand contact to ADP-alpha-D-glucose.

The protein belongs to the glycosyltransferase 1 family. Bacterial/plant glycogen synthase subfamily.

The enzyme catalyses [(1-&gt;4)-alpha-D-glucosyl](n) + ADP-alpha-D-glucose = [(1-&gt;4)-alpha-D-glucosyl](n+1) + ADP + H(+). The protein operates within glycan biosynthesis; glycogen biosynthesis. Its function is as follows. Synthesizes alpha-1,4-glucan chains using ADP-glucose. In Rhizobium tropici, this protein is Glycogen synthase.